We begin with the raw amino-acid sequence, 173 residues long: Development-specific protein S (173 aa).

Beta/gamma crystallin 'Greek key' domains lie at 2 to 46 and 48 to 86; these read ANIT…KVPP and VKAI…RVIS. Positions 8, 37, 38, 40, 54, 77, 78, and 80 each coordinate Ca(2+). A connecting peptide region spans residues 87–90; the sequence is VPVQ. Beta/gamma crystallin 'Greek key' domains follow at residues 91–135 and 136–173; these read PRAR…KPQG and LAVV…IRIS.

The protein belongs to the beta/gamma-crystallin family.

Protein S, induced in large amounts during fruiting body formation, assembles on the surface of myxospores in the presence of calcium ions. The chain is Development-specific protein S (tps) from Myxococcus xanthus.